We begin with the raw amino-acid sequence, 382 residues long: Anhydro-N-acetylmuramic acid kinase (382 aa).

Residue 9 to 16 (GTSLDGID) participates in ATP binding.

The protein belongs to the anhydro-N-acetylmuramic acid kinase family.

The catalysed reaction is 1,6-anhydro-N-acetyl-beta-muramate + ATP + H2O = N-acetyl-D-muramate 6-phosphate + ADP + H(+). The protein operates within amino-sugar metabolism; 1,6-anhydro-N-acetylmuramate degradation. It functions in the pathway cell wall biogenesis; peptidoglycan recycling. Catalyzes the specific phosphorylation of 1,6-anhydro-N-acetylmuramic acid (anhMurNAc) with the simultaneous cleavage of the 1,6-anhydro ring, generating MurNAc-6-P. Is required for the utilization of anhMurNAc either imported from the medium or derived from its own cell wall murein, and thus plays a role in cell wall recycling. This is Anhydro-N-acetylmuramic acid kinase from Bacillus cereus (strain AH187).